Reading from the N-terminus, the 204-residue chain is Holliday junction branch migration complex subunit RuvA (204 aa).

The segment at 1-64 (MIGKLKGTID…EDQLKLFGFM (64 aa)) is domain I. The tract at residues 65–143 (TALEREWFNL…AFAGEAINIA (79 aa)) is domain II. The segment at 144–151 (LKQELGEG) is flexible linker. The interval 152–204 (VAAAPVADAVSALTNLGYSRDQAANAVAAAMKTAGDGADSAKLIRLGLKELAR) is domain III.

The protein belongs to the RuvA family. As to quaternary structure, homotetramer. Forms an RuvA(8)-RuvB(12)-Holliday junction (HJ) complex. HJ DNA is sandwiched between 2 RuvA tetramers; dsDNA enters through RuvA and exits via RuvB. An RuvB hexamer assembles on each DNA strand where it exits the tetramer. Each RuvB hexamer is contacted by two RuvA subunits (via domain III) on 2 adjacent RuvB subunits; this complex drives branch migration. In the full resolvosome a probable DNA-RuvA(4)-RuvB(12)-RuvC(2) complex forms which resolves the HJ.

The protein localises to the cytoplasm. The RuvA-RuvB-RuvC complex processes Holliday junction (HJ) DNA during genetic recombination and DNA repair, while the RuvA-RuvB complex plays an important role in the rescue of blocked DNA replication forks via replication fork reversal (RFR). RuvA specifically binds to HJ cruciform DNA, conferring on it an open structure. The RuvB hexamer acts as an ATP-dependent pump, pulling dsDNA into and through the RuvAB complex. HJ branch migration allows RuvC to scan DNA until it finds its consensus sequence, where it cleaves and resolves the cruciform DNA. The chain is Holliday junction branch migration complex subunit RuvA from Rhizobium etli (strain CIAT 652).